We begin with the raw amino-acid sequence, 366 residues long: Protein BIG GRAIN 1-like B (366 aa).

Disordered stretches follow at residues 42–73 (DSST…DFNR) and 129–148 (FERS…EHGS). Residues 56-73 (QNREDTRVSANRRDDFNR) are compositionally biased toward basic and acidic residues.

This sequence belongs to the BIG GRAIN 1 (BG1) plant protein family.

The protein resides in the cell membrane. Functionally, involved in auxin transport. Regulator of the auxin signaling pathway. The chain is Protein BIG GRAIN 1-like B from Arabidopsis thaliana (Mouse-ear cress).